Consider the following 420-residue polypeptide: Putative polyketide beta-ketoacyl synthase 1 (420 aa).

Residues 3 to 414 enclose the Ketosynthase family 3 (KS3) domain; that stretch reads QRRVAITGIE…GFQSAMVLTS (412 aa). Catalysis depends on for beta-ketoacyl synthase activity residues Cys169, His307, and His344.

This sequence belongs to the thiolase-like superfamily. Beta-ketoacyl-ACP synthases family.

The protein operates within antifungal biosynthesis; monensin biosynthesis. In Streptomyces virginiae (Streptomyces cinnamonensis), this protein is Putative polyketide beta-ketoacyl synthase 1.